We begin with the raw amino-acid sequence, 159 residues long: D-aminoacyl-tRNA deacylase (159 aa).

The short motif at 142–143 (GP) is the Gly-cisPro motif, important for rejection of L-amino acids element.

Belongs to the DTD family. In terms of assembly, homodimer.

Its subcellular location is the cytoplasm. It carries out the reaction glycyl-tRNA(Ala) + H2O = tRNA(Ala) + glycine + H(+). The catalysed reaction is a D-aminoacyl-tRNA + H2O = a tRNA + a D-alpha-amino acid + H(+). Its function is as follows. An aminoacyl-tRNA editing enzyme that deacylates mischarged D-aminoacyl-tRNAs. Also deacylates mischarged glycyl-tRNA(Ala), protecting cells against glycine mischarging by AlaRS. Acts via tRNA-based rather than protein-based catalysis; rejects L-amino acids rather than detecting D-amino acids in the active site. By recycling D-aminoacyl-tRNA to D-amino acids and free tRNA molecules, this enzyme counteracts the toxicity associated with the formation of D-aminoacyl-tRNA entities in vivo and helps enforce protein L-homochirality. In Albidiferax ferrireducens (strain ATCC BAA-621 / DSM 15236 / T118) (Rhodoferax ferrireducens), this protein is D-aminoacyl-tRNA deacylase.